Here is a 390-residue protein sequence, read N- to C-terminus: Putative RING-H2 finger protein ATL12 (390 aa).

The signal sequence occupies residues 1–22 (MNSPQEISILFFFIIFLDYVSA). Residues 41-61 (LAIITGVFSIVFTLTFVLLVY) traverse the membrane as a helical segment. Residues 124–166 (CSVCLSKFEDVEILRLLPKCRHAFHIGCIDQWLEQHATCPLCR) form an RING-type; atypical zinc finger.

It belongs to the RING-type zinc finger family. ATL subfamily.

The protein localises to the membrane. The enzyme catalyses S-ubiquitinyl-[E2 ubiquitin-conjugating enzyme]-L-cysteine + [acceptor protein]-L-lysine = [E2 ubiquitin-conjugating enzyme]-L-cysteine + N(6)-ubiquitinyl-[acceptor protein]-L-lysine.. It participates in protein modification; protein ubiquitination. The protein is Putative RING-H2 finger protein ATL12 (ATL12) of Arabidopsis thaliana (Mouse-ear cress).